A 333-amino-acid chain; its full sequence is Tetraacyldisaccharide 4'-kinase (333 aa).

60–67 (TVGGTGKT) serves as a coordination point for ATP.

It belongs to the LpxK family.

It carries out the reaction a lipid A disaccharide + ATP = a lipid IVA + ADP + H(+). The protein operates within glycolipid biosynthesis; lipid IV(A) biosynthesis; lipid IV(A) from (3R)-3-hydroxytetradecanoyl-[acyl-carrier-protein] and UDP-N-acetyl-alpha-D-glucosamine: step 6/6. Functionally, transfers the gamma-phosphate of ATP to the 4'-position of a tetraacyldisaccharide 1-phosphate intermediate (termed DS-1-P) to form tetraacyldisaccharide 1,4'-bis-phosphate (lipid IVA). This is Tetraacyldisaccharide 4'-kinase from Ectopseudomonas mendocina (strain ymp) (Pseudomonas mendocina).